A 213-amino-acid polypeptide reads, in one-letter code: Dimethyl sulfoxide reductase transcriptional activator (213 aa).

Residues 155–206 (LTAKQREAALIAVHHGYYETPRRTELATLAEALGISKSALSQRLNAVEAKLA) enclose the HTH bat-type domain.

Its function is as follows. Involved in activating dmsEABCD gene expression related to dimethyl sulfoxide (DMSO) reductase. Required for anaerobic respiration on dimethyl sulfoxide (DMSO). The chain is Dimethyl sulfoxide reductase transcriptional activator from Haloferax volcanii (strain ATCC 29605 / DSM 3757 / JCM 8879 / NBRC 14742 / NCIMB 2012 / VKM B-1768 / DS2) (Halobacterium volcanii).